We begin with the raw amino-acid sequence, 552 residues long: MPSGRLQQQFIRLWQCCDGKTQDTTLNELADLLNCSRRHMRTLLNTMQARGWLTWEAEVGRGKRSRLTFLYTGLALQQQRAEDLLEQDRIDQLVQLVGDKSAVRQMLISHLGRSFRQGRHILRVLYYRPMHNLLPGTALRRSETHIARQIFSSLTRVNEENGELEADIAHHWQQISPLLWRFYLRPGIHFHHGRELEMEDVIASLTRINTLPLYSHITKIDSPTAWTLDIHLSQPDRWLPWLLGQVPAMILPREWETLANFASHPIGTGPYAVRRNTPNQLKILAFDDYFGYRALIDEVNVWVLPDISEEPACGLMLEGPIQGGEKAIESRLEEGCYYLLFDARTPRGAHPQVREWVSHVLSPTNLLYHADEPLQQLWFPAYGLLPRWHHARPGPGEKPAGLETLTLTFYREHIEHRVIARIMSALLAEHQVHLHIQEIDYDQWHAGEIESDIWLNSANFTLPLDFSLFAHLCEVPLLQNCIPRDWQDDAAQWRAGEMNLANWCQQLLANKAIVPLIHHWLIIQGQRSMRGLRMNTLGWFDFKSAWFAPPDP.

The region spanning 1 to 116 is the HTH marR-type domain; that stretch reads MPSGRLQQQF…LISHLGRSFR (116 aa). A DNA-binding region (H-T-H motif) is located at residues 26–49; the sequence is LNELADLLNCSRRHMRTLLNTMQA. Residues 163-493 form a solute-binding region; the sequence is ELEADIAHHW…RDWQDDAAQW (331 aa).

In terms of biological role, activates the small RNA gene sgrS under glucose-phosphate stress conditions as well as yfdZ. Represses its own transcription under both stress and non-stress conditions. Might act as a sensor of the intracellular accumulation of phosphoglucose by binding these molecules in its C-terminal solute-binding domain. The chain is HTH-type transcriptional regulator SgrR from Salmonella typhi.